The primary structure comprises 209 residues: Uracil phosphoribosyltransferase (209 aa).

5-phospho-alpha-D-ribose 1-diphosphate is bound by residues R79, R104, and 131-139; that span reads DPMLATGGS. Residues I194 and 199–201 contribute to the uracil site; that span reads GDA. D200 serves as a coordination point for 5-phospho-alpha-D-ribose 1-diphosphate.

It belongs to the UPRTase family. The cofactor is Mg(2+).

It catalyses the reaction UMP + diphosphate = 5-phospho-alpha-D-ribose 1-diphosphate + uracil. The protein operates within pyrimidine metabolism; UMP biosynthesis via salvage pathway; UMP from uracil: step 1/1. Allosterically activated by GTP. Its function is as follows. Catalyzes the conversion of uracil and 5-phospho-alpha-D-ribose 1-diphosphate (PRPP) to UMP and diphosphate. This is Uracil phosphoribosyltransferase from Streptococcus pyogenes serotype M1.